Here is a 559-residue protein sequence, read N- to C-terminus: Asparagine--tRNA ligase, cytoplasmic (559 aa).

The residue at position 72 (Ser72) is a Phosphoserine. An N6-acetyllysine mark is found at Lys255 and Lys501.

The protein belongs to the class-II aminoacyl-tRNA synthetase family.

The protein resides in the cytoplasm. It catalyses the reaction tRNA(Asn) + L-asparagine + ATP = L-asparaginyl-tRNA(Asn) + AMP + diphosphate + H(+). The chain is Asparagine--tRNA ligase, cytoplasmic (NARS) from Bos taurus (Bovine).